The primary structure comprises 395 residues: Trans-2-enoyl-CoA reductase [NADH] (395 aa).

Residues 47-52 (GASTGY), 73-74 (FE), 110-111 (DA), and 138-139 (LA) contribute to the NAD(+) site. A substrate-binding site is contributed by tyrosine 224. Tyrosine 234 (proton donor) is an active-site residue. NAD(+) is bound by residues lysine 243 and 272–274 (VVT).

It belongs to the TER reductase family. In terms of assembly, monomer.

It catalyses the reaction a 2,3-saturated acyl-CoA + NAD(+) = a (2E)-enoyl-CoA + NADH + H(+). The protein operates within lipid metabolism; fatty acid biosynthesis. Involved in the fatty acid synthesis (FAS II). Catalyzes the reduction of a carbon-carbon double bond in an enoyl moiety that is covalently linked to a coenzyme A (CoA). The chain is Trans-2-enoyl-CoA reductase [NADH] from Ruminiclostridium cellulolyticum (strain ATCC 35319 / DSM 5812 / JCM 6584 / H10) (Clostridium cellulolyticum).